A 596-amino-acid polypeptide reads, in one-letter code: Arginine--tRNA ligase (596 aa).

The 'HIGH' region motif lies at 128–138; the sequence is ANPTSSLHVGH.

The protein belongs to the class-I aminoacyl-tRNA synthetase family. As to quaternary structure, monomer.

Its subcellular location is the cytoplasm. It catalyses the reaction tRNA(Arg) + L-arginine + ATP = L-arginyl-tRNA(Arg) + AMP + diphosphate. This chain is Arginine--tRNA ligase, found in Acinetobacter baylyi (strain ATCC 33305 / BD413 / ADP1).